The primary structure comprises 182 residues: NADH-quinone oxidoreductase subunit I (182 aa).

2 4Fe-4S ferredoxin-type domains span residues 52–82 (LTRD…LQKA) and 92–121 (DFFR…LTPD). [4Fe-4S] cluster-binding residues include cysteine 62, cysteine 65, cysteine 68, cysteine 72, cysteine 101, cysteine 104, cysteine 107, and cysteine 111.

It belongs to the complex I 23 kDa subunit family. NDH-1 is composed of 13 different subunits. Subunits NuoA, H, J, K, L, M, N constitute the membrane sector of the complex. The cofactor is [4Fe-4S] cluster.

Its subcellular location is the cell inner membrane. The catalysed reaction is a quinone + NADH + 5 H(+)(in) = a quinol + NAD(+) + 4 H(+)(out). NDH-1 shuttles electrons from NADH, via FMN and iron-sulfur (Fe-S) centers, to quinones in the respiratory chain. The immediate electron acceptor for the enzyme in this species is believed to be ubiquinone. Couples the redox reaction to proton translocation (for every two electrons transferred, four hydrogen ions are translocated across the cytoplasmic membrane), and thus conserves the redox energy in a proton gradient. Required for plants roots colonization. This chain is NADH-quinone oxidoreductase subunit I (nuoI), found in Pseudomonas fluorescens.